The chain runs to 392 residues: Formate-dependent phosphoribosylglycinamide formyltransferase (392 aa).

Residues 22-23 and glutamate 82 contribute to the N(1)-(5-phospho-beta-D-ribosyl)glycinamide site; that span reads EL. Residues arginine 114, lysine 155, 160-165, 195-198, and glutamate 203 each bind ATP; these read SSGKGQ and EGVV. In terms of domain architecture, ATP-grasp spans 119-308; that stretch reads RLAAEELWVP…EFALHVRAFL (190 aa). Positions 267 and 279 each coordinate Mg(2+). N(1)-(5-phospho-beta-D-ribosyl)glycinamide contacts are provided by residues aspartate 286, lysine 355, and 362-363; that span reads RR.

This sequence belongs to the PurK/PurT family. As to quaternary structure, homodimer.

The catalysed reaction is N(1)-(5-phospho-beta-D-ribosyl)glycinamide + formate + ATP = N(2)-formyl-N(1)-(5-phospho-beta-D-ribosyl)glycinamide + ADP + phosphate + H(+). Its pathway is purine metabolism; IMP biosynthesis via de novo pathway; N(2)-formyl-N(1)-(5-phospho-D-ribosyl)glycinamide from N(1)-(5-phospho-D-ribosyl)glycinamide (formate route): step 1/1. Its function is as follows. Involved in the de novo purine biosynthesis. Catalyzes the transfer of formate to 5-phospho-ribosyl-glycinamide (GAR), producing 5-phospho-ribosyl-N-formylglycinamide (FGAR). Formate is provided by PurU via hydrolysis of 10-formyl-tetrahydrofolate. The sequence is that of Formate-dependent phosphoribosylglycinamide formyltransferase from Erwinia tasmaniensis (strain DSM 17950 / CFBP 7177 / CIP 109463 / NCPPB 4357 / Et1/99).